The primary structure comprises 99 residues: Integration host factor subunit alpha (99 aa).

Residues 52 to 73 are disordered; sequence FGNFTLRDKPQRPGRNPKTGEE.

Belongs to the bacterial histone-like protein family. As to quaternary structure, heterodimer of an alpha and a beta chain.

This protein is one of the two subunits of integration host factor, a specific DNA-binding protein that functions in genetic recombination as well as in transcriptional and translational control. The sequence is that of Integration host factor subunit alpha from Legionella pneumophila subsp. pneumophila (strain Philadelphia 1 / ATCC 33152 / DSM 7513).